The chain runs to 375 residues: Queuine tRNA-ribosyltransferase (375 aa).

D89 functions as the Proton acceptor in the catalytic mechanism. Residues D89 to F93, D143, Q187, and G214 contribute to the substrate site. The segment at G245–D251 is RNA binding. D264 (nucleophile) is an active-site residue. The segment at T269–R273 is RNA binding; important for wobble base 34 recognition. Zn(2+) is bound by residues C302, C304, C307, and H333.

It belongs to the queuine tRNA-ribosyltransferase family. As to quaternary structure, homodimer. Within each dimer, one monomer is responsible for RNA recognition and catalysis, while the other monomer binds to the replacement base PreQ1. Zn(2+) is required as a cofactor.

It catalyses the reaction 7-aminomethyl-7-carbaguanine + guanosine(34) in tRNA = 7-aminomethyl-7-carbaguanosine(34) in tRNA + guanine. It functions in the pathway tRNA modification; tRNA-queuosine biosynthesis. In terms of biological role, catalyzes the base-exchange of a guanine (G) residue with the queuine precursor 7-aminomethyl-7-deazaguanine (PreQ1) at position 34 (anticodon wobble position) in tRNAs with GU(N) anticodons (tRNA-Asp, -Asn, -His and -Tyr). Catalysis occurs through a double-displacement mechanism. The nucleophile active site attacks the C1' of nucleotide 34 to detach the guanine base from the RNA, forming a covalent enzyme-RNA intermediate. The proton acceptor active site deprotonates the incoming PreQ1, allowing a nucleophilic attack on the C1' of the ribose to form the product. After dissociation, two additional enzymatic reactions on the tRNA convert PreQ1 to queuine (Q), resulting in the hypermodified nucleoside queuosine (7-(((4,5-cis-dihydroxy-2-cyclopenten-1-yl)amino)methyl)-7-deazaguanosine). This Klebsiella pneumoniae subsp. pneumoniae (strain ATCC 700721 / MGH 78578) protein is Queuine tRNA-ribosyltransferase.